Consider the following 652-residue polypeptide: Beta-mannosyltransferase 1 (652 aa).

At 1–15 (MVDLFQWLKFYSMRR) the chain is on the cytoplasmic side. Residues 16-34 (LGQVAITLVLLNLFVFLGY) traverse the membrane as a helical segment. The Extracellular portion of the chain corresponds to 35–652 (KFTPSTVIGS…LYQLQEEERS (618 aa)). N-linked (GlcNAc...) asparagine glycosylation is present at asparagine 57. Residues 535–652 (PARYAKQMEN…LYQLQEEERS (118 aa)) are a coiled coil. A disordered region spans residues 536–621 (ARYAKQMENE…EAKENEAKKK (86 aa)).

The protein belongs to the BMT family.

It localises to the membrane. Functionally, beta-mannosyltransferase involved in cell wall biosynthesis. Involved in the beta-mannosylation of outer chains of N-glycans. This chain is Beta-mannosyltransferase 1 (BMT1), found in Komagataella phaffii (strain ATCC 76273 / CBS 7435 / CECT 11047 / NRRL Y-11430 / Wegner 21-1) (Yeast).